Reading from the N-terminus, the 367-residue chain is Glutamate 5-kinase (367 aa).

Lysine 10 is an ATP binding site. Substrate is bound by residues serine 50, aspartate 137, and asparagine 149. Residues 169-170 and 211-217 contribute to the ATP site; these read TD and TGGMGTK. Residues 275-353 form the PUA domain; sequence AGEITVDDGA…QEISEILGYE (79 aa).

This sequence belongs to the glutamate 5-kinase family.

The protein resides in the cytoplasm. It carries out the reaction L-glutamate + ATP = L-glutamyl 5-phosphate + ADP. Its pathway is amino-acid biosynthesis; L-proline biosynthesis; L-glutamate 5-semialdehyde from L-glutamate: step 1/2. Its function is as follows. Catalyzes the transfer of a phosphate group to glutamate to form L-glutamate 5-phosphate. This is Glutamate 5-kinase from Serratia proteamaculans (strain 568).